Consider the following 114-residue polypeptide: Transcription initiation factor IIA subunit 2 (114 aa).

The protein belongs to the TFIIA subunit 2 family. In terms of assembly, TFIIA is a heterodimer composed of the large toa1 and the small toa2 subunits.

The protein resides in the nucleus. Its function is as follows. TFIIA is a component of the transcription machinery of RNA polymerase II and plays an important role in transcriptional activation. TFIIA in a complex with tbp mediates transcriptional activity. The protein is Transcription initiation factor IIA subunit 2 (toa2) of Fusarium vanettenii (strain ATCC MYA-4622 / CBS 123669 / FGSC 9596 / NRRL 45880 / 77-13-4) (Fusarium solani subsp. pisi).